Here is a 311-residue protein sequence, read N- to C-terminus: Salutaridine reductase (311 aa).

NADP(+) is bound by residues 21–24 (NKGI), arginine 44, 70–71 (DV), and asparagine 98. Substrate contacts are provided by tyrosine 129 and serine 180. NADP(+) is bound by residues tyrosine 236, lysine 240, and 267–272 (VKTEMN). Tyrosine 236 serves as the catalytic Proton acceptor. An intrachain disulfide couples cysteine 263 to cysteine 305.

The protein belongs to the short-chain dehydrogenases/reductases (SDR) family.

The catalysed reaction is (7S)-salutaridinol + NADP(+) = salutaridine + NADPH + H(+). Its pathway is alkaloid biosynthesis; morphine biosynthesis. Strong substrate inhibition. Was thought to be due to mutually exclusive productive and non-productive modes of substrate binding in the active site. Alternatively, SALR may undergo significant conformational changes during catalytic turnover. In terms of biological role, short-chain dehydrogenases/reductases involved in biosynthesis of morphinan-type benzylisoquinoline and opiate alkaloids natural products. Catalyzes specifically the stereospecific conversion of salutaridine to salutaridinol. The chain is Salutaridine reductase from Papaver somniferum (Opium poppy).